Here is a 286-residue protein sequence, read N- to C-terminus: Phosphate import ATP-binding protein PstB (286 aa).

Residues 1-27 form a disordered region; that stretch reads MEPKETLRQRWPGRGRTEETGAMKKSD. The span at 15-27 shows a compositional bias: basic and acidic residues; sequence GRTEETGAMKKSD. Residues 33–281 form the ABC transporter domain; sequence MTVEHLNMYY…PDRKETEDYV (249 aa). 65-72 lines the ATP pocket; sequence GPSGCGKS.

It belongs to the ABC transporter superfamily. Phosphate importer (TC 3.A.1.7) family. In terms of assembly, the complex is composed of two ATP-binding proteins (PstB), two transmembrane proteins (PstC and PstA) and a solute-binding protein (PstS).

It is found in the cell membrane. It carries out the reaction phosphate(out) + ATP + H2O = ADP + 2 phosphate(in) + H(+). Its function is as follows. Part of the ABC transporter complex PstSACB involved in phosphate import. Responsible for energy coupling to the transport system. This Rubrobacter xylanophilus (strain DSM 9941 / JCM 11954 / NBRC 16129 / PRD-1) protein is Phosphate import ATP-binding protein PstB.